A 1055-amino-acid chain; its full sequence is MEASAGLVAGSHNRNELVLIRGHEEPKPLRALSGQVCEICGDEVGRTVDGDLFVACNECGFPVCRPCYEYERREGTQNCPQCKTRYKRLKGSPRVPGDEDEEDIDDLEHEFNIDDEKQKQLQQDQDGMQNSHITEAMLHGKMSYGRGPDDGDGNSTPLPPIITGARSVPVSGEFPISNSHGHGEFSSSLHKRIHPYPVSEPGSAKWDEKKEVSWKERMDDWKSKQGIVAGGAPDPDDYDADVPLNDEARQPLSRKVSIASSKVNPYRMVIILRLVVLGFFLRYRILHPVPDAIPLWLTSIICEIWFAVSWILDQFPKWYPIDRETYLDRLSLRYEREGEPSLLSAVDLFVSTVDPLKEPPLVTANTVLSILAVDYPVDKVSCYVSDDGASMLTFESLSETAEFARKWVPFCKKFSIEPRAPEFYFSQKVDYLKDKVHPNFVQERRAMKREYEEFKVRINALVAKAQKVPAEGWIMKDGTPWPGNNTRDHPGMIQVFLGHSGGHDTEGNELPRLVYVSREKRPGFQHHKKAGAMNALIRVSAVLTNAPFMLNLDCDHYINNSKAIREAMCFLMDPQVGRKVCYVQFPQRFDGIDVHDRYANRNTVFFDINMKGLDGIQGPVYVGTGCVFRRQALYGYNPPKGPKRPKMVTCDCCPCFGRKKRKHGKDGLPEAVAADGGMDSDKEMLMSQMNFEKRFGQSAAFVTSTLMEEGGVPPSSSPAALLKEAIHVISCGYEDKTDWGLELGWIYGSITEDILTGFKMHCRGWRSVYCMPKRAAFKGSAPINLSDRLNQVLRWALGSVEIFFSRHSPLLYGYKNGNLKWLERFSYINTTIYPFTSLPLLAYCTLPAVCLLTGKFIMPPISTFASLFFIALFISIFATGILEMRWSGVSIEEWWRNEQFWVIGGVSAHLFAVVQGLLKVLAGIDTNFTVTSKATGDEDDEFAELYAFKWTTLLIPPTTLLILNIIGVVAGVSDAINNGSEAWGPLFGKLFFAFWVIVHLYPFLKGLMGRQNRTPTIVVIWSVLLASIFSLLWVRIDPFTIKARGPDVRQCGINC.

Residues 1–268 are Cytoplasmic-facing; the sequence is MEASAGLVAG…ASSKVNPYRM (268 aa). C37, C40, C56, C59, C64, C67, C79, and C82 together coordinate Zn(2+). The RING-type; degenerate zinc-finger motif lies at 37-83; it reads CEICGDEVGRTVDGDLFVACNECGFPVCRPCYEYERREGTQNCPQCK. Residues 269–289 form a helical membrane-spanning segment; sequence VIILRLVVLGFFLRYRILHPV. Topologically, residues 290 to 291 are extracellular; sequence PD. A helical transmembrane segment spans residues 292–312; it reads AIPLWLTSIICEIWFAVSWIL. The Cytoplasmic portion of the chain corresponds to 313-831; it reads DQFPKWYPID…LERFSYINTT (519 aa). S351, K357, E358, and D387 together coordinate UDP-alpha-D-glucose. D387 is a catalytic residue. The stretch at 439-468 forms a coiled coil; the sequence is NFVQERRAMKREYEEFKVRINALVAKAQKV. K528 serves as a coordination point for UDP-alpha-D-glucose. Mn(2+) contacts are provided by K529 and D553. D753 is an active-site residue. A helical transmembrane segment spans residues 832-852; the sequence is IYPFTSLPLLAYCTLPAVCLL. Residues 853–860 are Extracellular-facing; the sequence is TGKFIMPP. A helical membrane pass occupies residues 861-881; the sequence is ISTFASLFFIALFISIFATGI. Residues 882–899 are Cytoplasmic-facing; the sequence is LEMRWSGVSIEEWWRNEQ. Residues 900-920 form a helical membrane-spanning segment; the sequence is FWVIGGVSAHLFAVVQGLLKV. The Extracellular portion of the chain corresponds to 921–951; the sequence is LAGIDTNFTVTSKATGDEDDEFAELYAFKWT. N-linked (GlcNAc...) asparagine glycosylation is present at N927. Residues 952–972 form a helical membrane-spanning segment; the sequence is TLLIPPTTLLILNIIGVVAGV. Residues 973–983 are Cytoplasmic-facing; it reads SDAINNGSEAW. The chain crosses the membrane as a helical span at residues 984 to 1004; it reads GPLFGKLFFAFWVIVHLYPFL. Over 1005–1013 the chain is Extracellular; the sequence is KGLMGRQNR. The chain crosses the membrane as a helical span at residues 1014–1034; sequence TPTIVVIWSVLLASIFSLLWV. Topologically, residues 1035-1055 are cytoplasmic; that stretch reads RIDPFTIKARGPDVRQCGINC.

Belongs to the glycosyltransferase 2 family. Plant cellulose synthase subfamily. It depends on Mn(2+) as a cofactor. Requires Zn(2+) as cofactor.

The protein localises to the cell membrane. It carries out the reaction [(1-&gt;4)-beta-D-glucosyl](n) + UDP-alpha-D-glucose = [(1-&gt;4)-beta-D-glucosyl](n+1) + UDP + H(+). The protein operates within glycan metabolism; plant cellulose biosynthesis. Functionally, catalytic subunit of cellulose synthase terminal complexes ('rosettes'), required for beta-1,4-glucan microfibril crystallization, a major mechanism of the cell wall formation. Involved in the secondary cell wall formation. This is Cellulose synthase A catalytic subunit 9 [UDP-forming] (CESA9) from Oryza sativa subsp. indica (Rice).